The sequence spans 659 residues: MKKNRVFATAGLVLLAAGVLAACSSSKSSDSSAPKAYGYVYTADPETLDYLISSKNSTTVVTSNGIDGLFTNDNYGNLAPAVAEDWEVSKDGLTYTYKIRKGVKWFTSDGEEYAEVTAKDFVNGLKHAADKKSEAMYLAENSVKGLADYLSGTSTDFSTVGVKAVDDYTLQYTLNQPEPFWNSKLTYSIFWPLNEEFETSKGSDFAKPTDPTSLLYNGPFLLKGLTAKSSVEFVKNEQYWDKENVHLDTINLAYYDGSDQESLERNFTSGAYSYARLYPTSSNYSKVAEEYKDNIYYTQSGSGIAGLGVNIDRQSYNYTSKTTDSEKVATKKALLNKDFRQALNFALDRSAYSAQINGKDGAALAVRNLFVKPDFVSAGEKTFGDLVAAQLPAYGDEWKGVNLADGQDGLFNADKAKAEFAKAKKALEADGVQFPIHLDVPVDQASKNYISRIQSFKQSVETVLGVENVVVDIQQMTSDEFLNITYYAANASSEDWDVSGGVSWGPDYQDPSTYLDILKTTSSETTKTYLGFDNPNSPSVVQVGLKEYDKLVDEAARETSDLNVRYEKYAAAQAWLTDSSLFIPAMASSGAAPVLSRIVPFTGASAQTGSKGSDVYFKYLKSQDKVVTKEEYEKAREKWLKEKAESNEKAQKELASHVK.

Positions 1 to 22 are cleaved as a signal peptide; the sequence is MKKNRVFATAGLVLLAAGVLAA. Residue cysteine 23 is the site of N-palmitoyl cysteine attachment. The S-diacylglycerol cysteine moiety is linked to residue cysteine 23.

Belongs to the bacterial solute-binding protein 5 family.

The protein resides in the cell membrane. Its function is as follows. Part of the binding-protein-dependent transport system for oligopeptides; probably an oligopeptide binding protein. The protein is Oligopeptide-binding protein AmiA (amiA) of Streptococcus pneumoniae serotype 4 (strain ATCC BAA-334 / TIGR4).